The sequence spans 120 residues: Large ribosomal subunit protein bL20 (120 aa).

This sequence belongs to the bacterial ribosomal protein bL20 family.

Functionally, binds directly to 23S ribosomal RNA and is necessary for the in vitro assembly process of the 50S ribosomal subunit. It is not involved in the protein synthesizing functions of that subunit. The protein is Large ribosomal subunit protein bL20 of Pseudoalteromonas translucida (strain TAC 125).